Consider the following 333-residue polypeptide: MWAALPLLCAGAWLLSTGATAELTVNAIEKFHFKSWMKQHQKTYSSVEYNHRLQMFANNWRKIQAHNQRNHTFKMALNQFSDMSFAEIKHKFLWSEPQNCSATKSNYLRGTGPYPSSMDWRKKGNVVSPVKNQGACGSCWTFSTTGALESAVAIASGKMLSLAEQQLVDCAQAFNNHGCKGGLPSQAFEYILYNKGIMEEDSYPYIGKDSSCRFNPQKAVAFVKNVVNITLNDEAAMVEAVALYNPVSFAFEVTEDFLMYKSGVYSSKSCHKTPDKVNHAVLAVGYGEQNGLLYWIVKNSWGSQWGENGYFLIERGKNMCGLAACASYPIPQV.

Positions Met1 to Thr20 are cleaved as a signal peptide. A propeptide spans Ala21–Ser95 (activation peptide). N-linked (GlcNAc...) asparagine glycans are attached at residues Asn70 and Asn99. Disulfide bonds link Cys100/Cys325, Cys136/Cys179, Cys170/Cys212, and Cys270/Cys320. Residues Lys104 to Pro113 constitute a propeptide that is removed on maturation. Cys139 is an active-site residue. Asn228 carries N-linked (GlcNAc...) asparagine glycosylation. Catalysis depends on residues His279 and Asn299.

The protein belongs to the peptidase C1 family. As to quaternary structure, composed of a mini chain and a large chain. The large chain may be split into heavy and light chain. All chains are held together by disulfide bonds. In terms of tissue distribution, widely expressed with highest expression found in non-skeletal tissues. Low levels found in skeletal tissue.

Its subcellular location is the lysosome. It catalyses the reaction Hydrolysis of proteins, acting as an aminopeptidase (notably, cleaving Arg-|-Xaa bonds) as well as an endopeptidase.. Important for the overall degradation of proteins in lysosomes. The protein is Pro-cathepsin H (Ctsh) of Mus musculus (Mouse).